The chain runs to 202 residues: Osteoclast-stimulating factor 1 (202 aa).

One can recognise an SH3 domain in the interval 12-71 (GQVKVFRALYTFEPRTPDELYFEEGDIIYISDMSDTNWWKGTCKGRTGLIPSNYVAEQAE). ANK repeat units follow at residues 72 to 101 (SIDNPLHEAAKRGNLSWLRECLDNQVGVNG), 105 to 135 (AGNTALYWACHGGHKDIVDVLFTQANLELNQ), and 139 to 168 (LGDTALHAAAWKGYADIVEMLLAKGARTDL).

The protein resides in the cytoplasm. Induces bone resorption, acting probably through a signaling cascade which results in the secretion of factor(s) enhancing osteoclast formation and activity. The chain is Osteoclast-stimulating factor 1 (OSTF1) from Gallus gallus (Chicken).